The following is a 370-amino-acid chain: Sodium-dependent organic anion transporter (370 aa).

The disordered stretch occupies residues 1–24 (MSADCEGNSTCPANSTEEDPPVGM). Topologically, residues 1–32 (MSADCEGNSTCPANSTEEDPPVGMEGQGSLKL) are extracellular. N-linked (GlcNAc...) asparagine glycosylation is found at N8 and N14. Residues 33–53 (VFTVLSAVMVGLVMFSFGCSV) traverse the membrane as a helical segment. Topologically, residues 54–67 (ESRKLWLHLRRPWG) are cytoplasmic. Residues 68–88 (IAVGLLCQFGLMPLTAYLLAI) traverse the membrane as a helical segment. The Extracellular portion of the chain corresponds to 89 to 97 (GFGLKPFQA). A helical transmembrane segment spans residues 98-118 (IAVLIMGSCPGGTVSNVLTFW). Residues 119-126 (VDGDMDLS) lie on the Cytoplasmic side of the membrane. A helical membrane pass occupies residues 127–147 (ISMTTCSTVAALGMMPLCLYV). Residues 148–159 (YTRSWTLPQSLT) are Extracellular-facing. The chain crosses the membrane as a helical span at residues 160 to 180 (IPYQSIGITLVSLVVPVASGI). Residues 181-195 (YVNYRWPKQATFILK) lie on the Cytoplasmic side of the membrane. A helical membrane pass occupies residues 196-216 (VGAAVGGMLLLVVAVTGVVLA). The Extracellular portion of the chain corresponds to 217-224 (KGWNIDVT). Residues 225-245 (LLVISCIFPLVGHVMGFLLAF) form a helical membrane-spanning segment. The Cytoplasmic segment spans residues 246-265 (LTHQSWQRCRTISIETGAQN). The helical transmembrane segment at 266–283 (IQLCIAMMQLSFSAEYLV) threads the bilayer. Position 284 (Q284) is a topological domain, extracellular. The helical transmembrane segment at 285–305 (LLNFALAYGLFQVLHGLLIVA) threads the bilayer. The Cytoplasmic segment spans residues 306–370 (AYQAYKRRQK…ELTSHVPSCE (65 aa)).

It belongs to the bile acid:sodium symporter (BASS) (TC 2.A.28) family. Glycosylated. As to expression, highly expressed in heart, lung, spleen and adrenal gland. Moderately expressed in skeletal muscle, testis and small intestine.

It localises to the membrane. The enzyme catalyses estrone 3-sulfate(out) + 2 Na(+)(out) = estrone 3-sulfate(in) + 2 Na(+)(in). It catalyses the reaction 17beta-estradiol 3-sulfate(out) + 2 Na(+)(out) = 17beta-estradiol 3-sulfate(in) + 2 Na(+)(in). The catalysed reaction is dehydroepiandrosterone 3-sulfate(out) + 2 Na(+)(out) = dehydroepiandrosterone 3-sulfate(in) + 2 Na(+)(in). It carries out the reaction androst-5-ene-diol 3-sulfate(out) + 2 Na(+)(out) = androst-5-ene-diol 3-sulfate(in) + 2 Na(+)(in). The enzyme catalyses pregnenolone sulfate(out) + 2 Na(+)(out) = pregnenolone sulfate(in) + 2 Na(+)(in). It catalyses the reaction taurolithocholate 3-sulfate(out) + 2 Na(+)(out) = taurolithocholate 3-sulfate(in) + 2 Na(+)(in). The catalysed reaction is androsterone 3alpha-sulfate(out) + 2 Na(+)(out) = androsterone 3alpha-sulfate(in) + 2 Na(+)(in). It carries out the reaction 5alpha-dihydrotestosterone sulfate(out) + 2 Na(+)(out) = 5alpha-dihydrotestosterone sulfate(in) + 2 Na(+)(in). The enzyme catalyses 17beta-estradiol 17-sulfate(out) + 2 Na(+)(out) = 17beta-estradiol 17-sulfate(in) + 2 Na(+)(in). It catalyses the reaction 17alpha-hydroxypregnenolone 3-sulfate(out) + 2 Na(+)(out) = 17alpha-hydroxypregnenolone 3-sulfate(in) + 2 Na(+)(in). The catalysed reaction is epiandrosterone 3-sulfate(out) + 2 Na(+)(out) = epiandrosterone 3-sulfate(in) + 2 Na(+)(in). It carries out the reaction epitestosterone 17-sulfate(out) + 2 Na(+)(out) = epitestosterone 17-sulfate(in) + 2 Na(+)(in). The enzyme catalyses testosterone 17-sulfate(out) + 2 Na(+)(out) = testosterone 17-sulfate(in) + 2 Na(+)(in). It catalyses the reaction 16alpha-hydroxydehydroepiandrosterone 3-sulfate(out) + 2 Na(+)(out) = 16alpha-hydroxydehydroepiandrosterone 3-sulfate(in) + 2 Na(+)(in). Its function is as follows. Transports sulfoconjugated steroid hormones from the extracellular compartment into the cytosol in a sodium-dependent manner without hydrolysis. Steroid sulfate hormones are commonly considered to be biologically inactive metabolites, that may be activated by steroid sulfatases into free steroids. May play an important role by delivering sulfoconjugated steroids to specific target cells in reproductive organs. May play a role transporting the estriol precursor 16alpha-hydroxydehydroepiandrosterone 3-sulfate (16a-OH-DHEAS) at the fetal blood vessel endothelium. Can also transport other sulfoconjugated molecules such as taurolithocholic acid-3-sulfate and sulfoconjugated pyrenes. The polypeptide is Sodium-dependent organic anion transporter (Slc10a6) (Rattus norvegicus (Rat)).